A 1196-amino-acid chain; its full sequence is [NU+] prion formation protein 1 (1196 aa).

Disordered regions lie at residues methionine 1–tyrosine 49 and threonine 103–serine 125. Composition is skewed to polar residues over residues glycine 39–tyrosine 49 and threonine 103–glutamine 113. Residues serine 114–serine 125 are compositionally biased toward low complexity. Serine 443 carries the post-translational modification Phosphoserine. ABC transporter domains follow at residues isoleucine 570–leucine 786 and alanine 812–valine 1129. Residues glycine 604–serine 611 and glycine 846–serine 853 contribute to the ATP site. Residues arginine 942–tyrosine 1003 enclose the Chromo domain. Disordered regions lie at residues alanine 1137 to leucine 1166 and glutamate 1177 to aspartate 1196. A Phosphothreonine modification is found at threonine 1191.

Belongs to the ABC transporter superfamily. ABCF family. EF3 subfamily.

Its subcellular location is the cytoplasm. It localises to the nucleus. In terms of biological role, may be involved in the mRNA export process. Forms the [NU+] prion and induces [PSI+] prion formation. This is [NU+] prion formation protein 1 (NEW1) from Saccharomyces cerevisiae (strain ATCC 204508 / S288c) (Baker's yeast).